A 228-amino-acid polypeptide reads, in one-letter code: NADH-quinone oxidoreductase subunit C (228 aa).

It belongs to the complex I 30 kDa subunit family. As to quaternary structure, NDH-1 is composed of 14 different subunits. Subunits NuoB, C, D, E, F, and G constitute the peripheral sector of the complex.

The protein localises to the cell membrane. It catalyses the reaction a quinone + NADH + 5 H(+)(in) = a quinol + NAD(+) + 4 H(+)(out). Its function is as follows. NDH-1 shuttles electrons from NADH, via FMN and iron-sulfur (Fe-S) centers, to quinones in the respiratory chain. The immediate electron acceptor for the enzyme in this species is believed to be a menaquinone. Couples the redox reaction to proton translocation (for every two electrons transferred, four hydrogen ions are translocated across the cytoplasmic membrane), and thus conserves the redox energy in a proton gradient. The polypeptide is NADH-quinone oxidoreductase subunit C (Mycobacteroides abscessus (strain ATCC 19977 / DSM 44196 / CCUG 20993 / CIP 104536 / JCM 13569 / NCTC 13031 / TMC 1543 / L948) (Mycobacterium abscessus)).